Consider the following 446-residue polypeptide: MKPTHSPKTYRVKSFGCQMNVYDGERMAEMLDEKGIEPAPEGEDADLVVLNTCHIREKAVDKVYSDIGRLTKGKTQTKAPMIAVAGCVAQAEGEEIMARAPAVSMVVGPQAYHRLPGMIDAAVAGKRSTDTDMPADAKFAALPKRRKSAPSAFLTIQEGCDKFCTYCVVPYTRGAEISRPFSALIDEAKKLVEAGAKEITLLGQNVSAWTGEDAKGRALGMAGLIRELAKDPDLKRVRYTTSHPADMDDELIATHGEVEKLMPYLHLPVQSGNDRVLKAMNRSHTAESYLRLLERFRAARPDLALSGDFIVGFPGETEAEFEDTLKIVDEVRYAQAYSFKYSPRPGTPAATMERQVPKEVMDERLQRLQAALNRDQAAFNAGSVGRTCEVLVERTGKHPGQWLGKSPWLQSVWFDGDVAIGDLVQVELVEAGPNSLAGQLLETVAA.

The MTTase N-terminal domain maps to 8 to 124; the sequence is KTYRVKSFGC…LPGMIDAAVA (117 aa). [4Fe-4S] cluster is bound by residues cysteine 17, cysteine 53, cysteine 87, cysteine 160, cysteine 164, and cysteine 167. Residues 146 to 378 enclose the Radical SAM core domain; sequence RKSAPSAFLT…QAALNRDQAA (233 aa). The region spanning 381-442 is the TRAM domain; the sequence is AGSVGRTCEV…PNSLAGQLLE (62 aa).

Belongs to the methylthiotransferase family. MiaB subfamily. As to quaternary structure, monomer. The cofactor is [4Fe-4S] cluster.

It is found in the cytoplasm. It catalyses the reaction N(6)-dimethylallyladenosine(37) in tRNA + (sulfur carrier)-SH + AH2 + 2 S-adenosyl-L-methionine = 2-methylsulfanyl-N(6)-dimethylallyladenosine(37) in tRNA + (sulfur carrier)-H + 5'-deoxyadenosine + L-methionine + A + S-adenosyl-L-homocysteine + 2 H(+). Functionally, catalyzes the methylthiolation of N6-(dimethylallyl)adenosine (i(6)A), leading to the formation of 2-methylthio-N6-(dimethylallyl)adenosine (ms(2)i(6)A) at position 37 in tRNAs that read codons beginning with uridine. This chain is tRNA-2-methylthio-N(6)-dimethylallyladenosine synthase, found in Erythrobacter litoralis (strain HTCC2594).